Consider the following 277-residue polypeptide: Acetyl-coenzyme A carboxylase carboxyl transferase subunit beta (277 aa).

The CoA carboxyltransferase N-terminal domain occupies 22-277; it reads LWTKCPGCNR…TLKQLLYFLT (256 aa). Zn(2+) is bound by residues cysteine 26, cysteine 29, cysteine 45, and cysteine 48. The C4-type zinc-finger motif lies at 26–48; sequence CPGCNRFLYTKELELNQSVCHYC.

It belongs to the AccD/PCCB family. Acetyl-CoA carboxylase is a heterohexamer composed of biotin carboxyl carrier protein (AccB), biotin carboxylase (AccC) and two subunits each of ACCase subunit alpha (AccA) and ACCase subunit beta (AccD). Zn(2+) is required as a cofactor.

It is found in the cytoplasm. The catalysed reaction is N(6)-carboxybiotinyl-L-lysyl-[protein] + acetyl-CoA = N(6)-biotinyl-L-lysyl-[protein] + malonyl-CoA. Its pathway is lipid metabolism; malonyl-CoA biosynthesis; malonyl-CoA from acetyl-CoA: step 1/1. In terms of biological role, component of the acetyl coenzyme A carboxylase (ACC) complex. Biotin carboxylase (BC) catalyzes the carboxylation of biotin on its carrier protein (BCCP) and then the CO(2) group is transferred by the transcarboxylase to acetyl-CoA to form malonyl-CoA. This is Acetyl-coenzyme A carboxylase carboxyl transferase subunit beta from Methylacidiphilum infernorum (isolate V4) (Methylokorus infernorum (strain V4)).